Consider the following 607-residue polypeptide: T-box transcription factor TBX18 (607 aa).

The Engrailed homology 1 repressor motif lies at 18–28 (HAFSVEALIGA). The segment at 30 to 141 (KQQQLQKKRR…PLPSPQAPRV (112 aa)) is disordered. The short motif at 36 to 40 (KKRRK) is the Nuclear localization signal element. Residues 44-53 (EEAAGAVDDG) show a composition bias toward low complexity. The segment at residues 143–330 (LQGAELWKRF…RNPFAKGFRD (188 aa)) is a DNA-binding region (T-box).

In terms of assembly, homodimer. Can form a heterodimer with TBX15. Interacts with GATA4 and NKX2-5. Interacts with PAX3. Interacts (via engrailed homology 1 repressor motif) with TLE3; this interaction represses TBX18 transcriptional activity. Interacts with SIX1.

It localises to the nucleus. Functionally, acts as a transcriptional repressor involved in developmental processes of a variety of tissues and organs, including the heart and coronary vessels, the ureter and the vertebral column. Required for embryonic development of the sino atrial node (SAN) head area. The polypeptide is T-box transcription factor TBX18 (TBX18) (Homo sapiens (Human)).